A 497-amino-acid polypeptide reads, in one-letter code: Probable cytosol aminopeptidase (497 aa).

Mn(2+)-binding residues include K267 and D272. K279 is an active-site residue. The Mn(2+) site is built by D290, D349, and E351. R353 is an active-site residue.

This sequence belongs to the peptidase M17 family. The cofactor is Mn(2+).

Its subcellular location is the cytoplasm. The catalysed reaction is Release of an N-terminal amino acid, Xaa-|-Yaa-, in which Xaa is preferably Leu, but may be other amino acids including Pro although not Arg or Lys, and Yaa may be Pro. Amino acid amides and methyl esters are also readily hydrolyzed, but rates on arylamides are exceedingly low.. It carries out the reaction Release of an N-terminal amino acid, preferentially leucine, but not glutamic or aspartic acids.. Functionally, presumably involved in the processing and regular turnover of intracellular proteins. Catalyzes the removal of unsubstituted N-terminal amino acids from various peptides. This is Probable cytosol aminopeptidase from Pseudomonas entomophila (strain L48).